A 174-amino-acid chain; its full sequence is Rubredoxin-2 (174 aa).

In terms of domain architecture, Rubredoxin-like 1 spans 1–53 (MAKYQCPDCEYIYDEVAGHPHEGFPPGTSWETIPEEWACPDCAVRDKADFVVI). Residues Cys6, Cys9, Cys39, and Cys42 each contribute to the Fe cation site. Residues 56 to 65 (GSASPASGAA) show a composition bias toward low complexity. A disordered region spans residues 56 to 115 (GSASPASGAATPEVRTATTPPKAEASPQKSTGASTPSANNKAKAKAKAKPARAKSSKDST). Residues 97–109 (AKAKAKAKPARAK) are compositionally biased toward basic residues. The region spanning 121-172 (FRKWICITCGHIYDEALGDETEGFAPGTLFEDIPDDWCCPDCGATKEDYVLH) is the Rubredoxin-like 2 domain. Fe cation-binding residues include Cys126, Cys129, Cys159, and Cys162.

It belongs to the rubredoxin family. Fe(3+) serves as cofactor.

It localises to the cytoplasm. It functions in the pathway hydrocarbon metabolism; alkane degradation. In terms of biological role, involved in the hydrocarbon hydroxylating system, which transfers electrons from NADH to rubredoxin reductase and then through rubredoxin to alkane 1 monooxygenase. This chain is Rubredoxin-2 (alkG), found in Alcanivorax borkumensis (strain ATCC 700651 / DSM 11573 / NCIMB 13689 / SK2).